The sequence spans 403 residues: Lissencephaly-1 homolog 1 (403 aa).

Residues 7–38 (QRDELNQAIHQYLLISYQQSAQLFKTEAAVKD) enclose the LisH domain. The stretch at 51–87 (NSIVRLSKRVITLEQQVEQLNEQLAQAQAGKIQFNKS) forms a coiled coil. WD repeat units follow at residues 103-142 (GHRA…FEKT), 145-184 (GHTS…CVKT), 187-226 (GHEH…CKKT), 229-270 (EHQE…HQLS), 271-327 (GHEH…NLFT), 330-369 (GHDN…QKKK), and 373-403 (AHDK…WLLS).

Belongs to the WD repeat LIS1/nudF family.

It localises to the cytoplasm. It is found in the cytoskeleton. Its subcellular location is the microtubule organizing center. The protein localises to the centrosome. Positively regulates the activity of the minus-end directed microtubule motor protein dynein. May enhance dynein-mediated microtubule sliding by targeting dynein to the microtubule plus end. Required for several dynein- and microtubule-dependent processes. This is Lissencephaly-1 homolog 1 from Paramecium tetraurelia.